A 346-amino-acid polypeptide reads, in one-letter code: Probable dual-specificity RNA methyltransferase RlmN (346 aa).

Residue E92 is the Proton acceptor of the active site. The region spanning 98–332 is the Radical SAM core domain; that stretch reads TDQRLTVCVS…VSLRASRGLD (235 aa). A disulfide bond links C105 and C337. [4Fe-4S] cluster-binding residues include C112, C116, and C119. Residues 159–160, S189, 218–220, and N294 contribute to the S-adenosyl-L-methionine site; these read GE and SLH. Catalysis depends on C337, which acts as the S-methylcysteine intermediate.

This sequence belongs to the radical SAM superfamily. RlmN family. Requires [4Fe-4S] cluster as cofactor.

It is found in the cytoplasm. The catalysed reaction is adenosine(2503) in 23S rRNA + 2 reduced [2Fe-2S]-[ferredoxin] + 2 S-adenosyl-L-methionine = 2-methyladenosine(2503) in 23S rRNA + 5'-deoxyadenosine + L-methionine + 2 oxidized [2Fe-2S]-[ferredoxin] + S-adenosyl-L-homocysteine. The enzyme catalyses adenosine(37) in tRNA + 2 reduced [2Fe-2S]-[ferredoxin] + 2 S-adenosyl-L-methionine = 2-methyladenosine(37) in tRNA + 5'-deoxyadenosine + L-methionine + 2 oxidized [2Fe-2S]-[ferredoxin] + S-adenosyl-L-homocysteine. In terms of biological role, specifically methylates position 2 of adenine 2503 in 23S rRNA and position 2 of adenine 37 in tRNAs. The polypeptide is Probable dual-specificity RNA methyltransferase RlmN (Synechococcus sp. (strain CC9311)).